Consider the following 487-residue polypeptide: DNA ligase (487 aa).

The active-site N6-AMP-lysine intermediate is the Lys-159. ATP is bound by residues Arg-164, Arg-182, and Glu-217. Glu-217 lines the a divalent metal cation pocket. Positions Glu-229–Ala-237 are interaction with the sliding clamp. Residue Glu-344 participates in a divalent metal cation binding. The ATP site is built by Arg-359 and Lys-365.

It belongs to the ATP-dependent DNA ligase family. In terms of assembly, interacts with the sliding clamp. It depends on a divalent metal cation as a cofactor.

It catalyses the reaction ATP + (deoxyribonucleotide)n-3'-hydroxyl + 5'-phospho-(deoxyribonucleotide)m = (deoxyribonucleotide)n+m + AMP + diphosphate.. Its function is as follows. DNA ligase, which is expressed in the early stage of lytic development, has been implicated in T4 DNA synthesis and genetic recombination. It may also play a role in T4 DNA repair. The polypeptide is DNA ligase (30) (Enterobacteria phage T4 (Bacteriophage T4)).